The primary structure comprises 999 residues: Desmoglein-3 (999 aa).

Positions 1–23 (MMGLFPRTTGALAIFVVVILVHG) are cleaved as a signal peptide. Residues 24–49 (ELRIETKGQYDEEEMTMQQAKRRQKR) constitute a propeptide that is removed on maturation. Cadherin domains lie at 50 to 158 (EWVK…PVFS), 159 to 268 (QQIF…PMFR), 269 to 383 (DSQY…GIAF), and 386 to 499 (ASKT…VLEK). Residues 50–615 (EWVKFAKPCR…TRYGRPHSGR (566 aa)) lie on the Extracellular side of the membrane. N-linked (GlcNAc...) asparagine glycosylation is found at Asn110 and Asn180. N-linked (GlcNAc...) asparagine glycans are attached at residues Asn459 and Asn545. The helical transmembrane segment at 616–640 (LGPAAIGLLLLGLLLLLLAPLLLLT) threads the bilayer. Residues 641–999 (CDCGAGSTGG…CTEDPCSRLI (359 aa)) are Cytoplasmic-facing. The interval 642–714 (DCGAGSTGGV…NTYARGTAVE (73 aa)) is required for interaction with CTNND1 and localization at cell-cell junctions. 2 Desmoglein repeat repeats span residues 910-935 (LSTS…LVTE) and 936-966 (TYSA…ERVI).

Homodimer. Part of a complex that contains DSG3, PKP1, YAP1 and YWHAG; the complex is required for localization of DSG3 and YAP1 to the cell membrane in keratinocytes. Interacts with PKP2. Interacts with CTNND1; the interaction facilitates DSG3 localization and retention at cell-cell junctions. Interacts with CDH1; the interaction is required for CDH1 localization to developing adherens junctions. Interacts with RAC1; the interaction is required for DSG3 translocation to cell-cell junctions, organization of cortical F-actin bundles and actin anchoring at cell-cell junctions. Interacts with DSC3; the interaction may limit the interaction of DSC3 with p38MAPK family members and therefore repress p38MAPK signaling activation. Expressed throughout the basal and spinous layer of the epidermis with weak expression in the granular layer (at protein level). Expressed in skin and mucosa (at protein level). Expressed in the basal layer of the outer root sheath of the telogen hair club, specifically at the cell membrane between the apex of the cells and the surrounding hair club (at protein level). Expression is less abundant between the lateral margins of the outer root sheath basal cells (at protein level). Also expressed in the tongue, tonsil and esophagus.

It localises to the cell membrane. Its subcellular location is the cell junction. The protein resides in the desmosome. It is found in the cytoplasm. The protein localises to the tight junction. Its function is as follows. A component of desmosome cell-cell junctions which are required for positive regulation of cellular adhesion. Required for adherens and desmosome junction assembly in response to mechanical force in keratinocytes. Required for desmosome-mediated cell-cell adhesion of cells surrounding the telogen hair club and the basal layer of the outer root sheath epithelium, consequently is essential for the anchoring of telogen hairs in the hair follicle. Required for the maintenance of the epithelial barrier via promoting desmosome-mediated intercellular attachment of suprabasal epithelium to basal cells. May play a role in the protein stability of the desmosome plaque components DSP, JUP, PKP1, PKP2 and PKP3. Required for YAP1 localization at the plasma membrane in keratinocytes in response to mechanical strain, via the formation of an interaction complex composed of DSG3, PKP1 and YWHAG. May also be involved in the positive regulation of YAP1 target gene transcription and as a result cell proliferation. Positively regulates cellular contractility and cell junction formation via organization of cortical F-actin bundles and anchoring of actin to tight junctions, in conjunction with RAC1. The cytoplasmic pool of DSG3 is required for the localization of CDH1 and CTNNB1 at developing adherens junctions, potentially via modulation of SRC activity. Inhibits keratinocyte migration via suppression of p38MAPK signaling, may therefore play a role in moderating wound healing. This chain is Desmoglein-3, found in Homo sapiens (Human).